Here is a 135-residue protein sequence, read N- to C-terminus: MAKITVVNNQDELYKVINQKKSEGYLETELAVISKSKLHLDDLHNSQISLMATSGSFSDRMSRLLTGEDGEETVLSRYDLTDNELEGYKQDILNDKMLVVANSDRSSHDEVEDNNAAYKEVDITHYAAESEGPKA.

It belongs to the UPF0355 family.

This is UPF0355 protein SE_2351 from Staphylococcus epidermidis (strain ATCC 12228 / FDA PCI 1200).